Consider the following 400-residue polypeptide: 2-octaprenylphenol hydroxylase (400 aa).

FAD is bound by residues 49–52 and 297–303; these read RVSA and LAGQGVN.

The protein belongs to the UbiH/COQ6 family. As to quaternary structure, homotetramer. Component of the Ubi complex metabolon, which regroups five ubiquinone biosynthesis proteins (UbiE, UbiF, UbiG, UbiH and UbiI) and two accessory factors (UbiK and the lipid-binding protein UbiJ). It depends on FAD as a cofactor.

It is found in the cytoplasm. It carries out the reaction 2-all-trans-octaprenylphenol + NADPH + O2 + H(+) = 3-(all-trans-octaprenyl)benzene-1,2-diol + NADP(+) + H2O. The enzyme catalyses a 2-(all-trans-polyprenyl)phenol + NADPH + O2 + H(+) = a 3-(all-trans-polyprenyl)benzene-1,2-diol + NADP(+) + H2O. Its pathway is cofactor biosynthesis; ubiquinone biosynthesis. In terms of biological role, FAD-dependent monooxygenase required for the aerobic hydroxylation of 2-octaprenylphenol to 2-octaprenyl-6-hydroxy-phenol, the first hydroxylation step in coenzyme Q (ubiquinone) biosynthesis. This chain is 2-octaprenylphenol hydroxylase, found in Escherichia coli (strain K12).